Here is a 669-residue protein sequence, read N- to C-terminus: MTVLAPLRRLHTRAAFSSYGREIALQKRFLNLNSCSAVRRYGTGFSNNLRIKKLKNAFGVVRANSTKSTSTVTTASPIKYDSSFVGKTGGEIFHDMMLKHNVKHVFGYPGGAILPVFDAIYRSPHFEFILPRHEQAAGHAAQAYSRVTKKPGVVLVTSGPGATNVITPIADALADGTPLVVFSGQVATSAIGSDAFQEADMVGISRSCTKWNVMVKDVADLPRRIDEAFEIATSGRPGPVLVDLPKDVTASVLKEPIPILSSVPSMNRRMKEVLEEGSKNVTAKIDRVANLLKLAKKPVIFCGHGVLANPECPTLLRKFSERLQIPVTTSLLGLGAVDERSDLSLHMLGMHGSGYANMAMQEADLILALGVRFDDRVTGNVSLFAPQARLAAAEERGGIIHFDISPKNIGKVVQPTEAIEGDVYESLKLLDSATKNIKIPSRFDWLSQIQTWKERFPFTFTRSAPGELVKPQEVIQELDKQTSDIKDKVTITTGVGAHQMWAATFYRWTKPSSLVTSGGLGTMGFGLPAAIGASVAAPKDIVIDIDGDASFSMTGMELATVRQFDIPVKILILNNEEQGMVTQWQNLFYEKRYSHTHQKNPNFVKLADAMGIKALRVEKREDLAKKMKEFLSTKGPVLMEVLVAQKEHVYPFVPGGKALHQFILHESLS.

The N-terminal 140 residues, 1-140 (MTVLAPLRRL…PRHEQAAGHA (140 aa)), are a transit peptide targeting the mitochondrion. A thiamine diphosphate-binding site is contributed by Glu-134. FAD-binding positions include Arg-236, 351–372 (HGSG…LGVR), and 403–422 (DISP…IEGD). The thiamine pyrophosphate binding stretch occupies residues 497–577 (AHQMWAATFY…VKILILNNEE (81 aa)). Residues Asp-548 and Asn-575 each contribute to the Mg(2+) site.

It belongs to the TPP enzyme family. Requires Mg(2+) as cofactor. Thiamine diphosphate serves as cofactor.

It localises to the mitochondrion. The catalysed reaction is 2 pyruvate + H(+) = (2S)-2-acetolactate + CO2. It functions in the pathway amino-acid biosynthesis; L-isoleucine biosynthesis; L-isoleucine from 2-oxobutanoate: step 1/4. The protein operates within amino-acid biosynthesis; L-valine biosynthesis; L-valine from pyruvate: step 1/4. In Schizosaccharomyces pombe (strain 972 / ATCC 24843) (Fission yeast), this protein is Acetolactate synthase, mitochondrial (ilv1).